Consider the following 275-residue polypeptide: Dermonecrotic toxin SpeSicTox-betaIIA3ii (275 aa).

Histidine 5 is a catalytic residue. The Mg(2+) site is built by glutamate 25 and aspartate 27. Histidine 41 functions as the Nucleophile in the catalytic mechanism. 2 cysteine pairs are disulfide-bonded: cysteine 45-cysteine 51 and cysteine 47-cysteine 190. Aspartate 85 is a Mg(2+) binding site.

Belongs to the arthropod phospholipase D family. Class II subfamily. It depends on Mg(2+) as a cofactor. In terms of tissue distribution, expressed by the venom gland.

It is found in the secreted. The enzyme catalyses an N-(acyl)-sphingosylphosphocholine = an N-(acyl)-sphingosyl-1,3-cyclic phosphate + choline. It carries out the reaction an N-(acyl)-sphingosylphosphoethanolamine = an N-(acyl)-sphingosyl-1,3-cyclic phosphate + ethanolamine. It catalyses the reaction a 1-acyl-sn-glycero-3-phosphocholine = a 1-acyl-sn-glycero-2,3-cyclic phosphate + choline. The catalysed reaction is a 1-acyl-sn-glycero-3-phosphoethanolamine = a 1-acyl-sn-glycero-2,3-cyclic phosphate + ethanolamine. In terms of biological role, dermonecrotic toxins cleave the phosphodiester linkage between the phosphate and headgroup of certain phospholipids (sphingolipid and lysolipid substrates), forming an alcohol (often choline) and a cyclic phosphate. This toxin acts on sphingomyelin (SM). It may also act on ceramide phosphoethanolamine (CPE), lysophosphatidylcholine (LPC) and lysophosphatidylethanolamine (LPE), but not on lysophosphatidylserine (LPS), and lysophosphatidylglycerol (LPG). It acts by transphosphatidylation, releasing exclusively cyclic phosphate products as second products. Induces dermonecrosis, hemolysis, increased vascular permeability, edema, inflammatory response, and platelet aggregation. The chain is Dermonecrotic toxin SpeSicTox-betaIIA3ii from Sicarius peruensis (Six-eyed sand spider).